The chain runs to 82 residues: RNA-binding protein Hfq (82 aa).

Residues 11 to 71 (DTFLNHVRKT…ISTIMPGAPI (61 aa)) enclose the Sm domain.

Belongs to the Hfq family. As to quaternary structure, homohexamer.

Its function is as follows. RNA chaperone that binds small regulatory RNA (sRNAs) and mRNAs to facilitate mRNA translational regulation in response to envelope stress, environmental stress and changes in metabolite concentrations. Also binds with high specificity to tRNAs. In Rhodopseudomonas palustris (strain BisA53), this protein is RNA-binding protein Hfq.